We begin with the raw amino-acid sequence, 192 residues long: Xanthine phosphoribosyltransferase (192 aa).

Leu20 and Asn27 together coordinate xanthine. 128–132 contributes to the 5-phospho-alpha-D-ribose 1-diphosphate binding site; the sequence is ANGDA. Position 156 (Lys156) interacts with xanthine.

The protein belongs to the purine/pyrimidine phosphoribosyltransferase family. Xpt subfamily. Homodimer.

It localises to the cytoplasm. It catalyses the reaction XMP + diphosphate = xanthine + 5-phospho-alpha-D-ribose 1-diphosphate. Its pathway is purine metabolism; XMP biosynthesis via salvage pathway; XMP from xanthine: step 1/1. In terms of biological role, converts the preformed base xanthine, a product of nucleic acid breakdown, to xanthosine 5'-monophosphate (XMP), so it can be reused for RNA or DNA synthesis. This is Xanthine phosphoribosyltransferase from Staphylococcus epidermidis (strain ATCC 35984 / DSM 28319 / BCRC 17069 / CCUG 31568 / BM 3577 / RP62A).